A 272-amino-acid chain; its full sequence is uncharacterized protein (272 aa).

The HTH merR-type domain maps to Met-1–Thr-27.

This is an uncharacterized protein from Aquifex aeolicus (strain VF5).